The following is a 504-amino-acid chain: MPTISVKKREIEKLLGKSYDSETFSDILFNYGLEIDECIEESDDITYKIEIPANRYDLLCAEGLNYALQSYLFGKVFEDINLQSSEYTIFKQHFGNRSCVAAAIIKNYKFDKYSYDSFISYQEKLCGNLGRNRSLVSMGTHDLDTISWPVTYKSIKKTELKFAPLNCTKEINDLEMHFKDDKNIGKYLQYVDNDNYIVFMDAKGHILSVPPVINSNRTKISVNTTNILVEVTGTNTYKVNTCLKMILSAFRTDNMCQVNIISDKQEILEIKDKSYLLSIDEVYKELNINISVIDLSDLLIKMMYKTNIIDDKHLNVTVPSVRQDVLHKADLIEDIAICYGFNNINMVMPDINTIGSENRLNKFSDKLRLEMCMLGFTEVYTMVLVSKSDNIFGDNSAVVSNYKSLECEAVRSSLYPGLMKAVSSNLHCKIPIKIFEVGDVVFLDSESDVGARNRRYLSCLYVGNKSHLEDVQGPMTVILEKCGIKDYKFERMDDEKKYLKNQSA.

The region spanning 270–346 is the B5 domain; that stretch reads IKDKSYLLSI…ICYGFNNINM (77 aa). Residues Asp-324, Asp-330, Glu-333, and Asp-334 each contribute to the Mg(2+) site.

The protein belongs to the phenylalanyl-tRNA synthetase beta subunit family. Type 2 subfamily. In terms of assembly, tetramer of two alpha and two beta subunits. It depends on Mg(2+) as a cofactor.

It localises to the cytoplasm. It carries out the reaction tRNA(Phe) + L-phenylalanine + ATP = L-phenylalanyl-tRNA(Phe) + AMP + diphosphate + H(+). The chain is Probable phenylalanine--tRNA ligase beta subunit from Vairimorpha ceranae (strain BRL01) (Microsporidian parasite).